The primary structure comprises 199 residues: MSGHTPTYASHRRNRVKLVEAHNRAGLFKERTLDLIRGGASVQDPAFVYAFTAAKEACADLNNQLRSAARIASVEQKIRDIQSKVEEQTSIQQILNTNRRYIAPDFIRGLDKTEDDNTDNIDRLEDAVGPNIEHENHTWFGEDDEALLTQWMLTTHPPTSKYLQLQDLCVPTTIPTDMNQMQPQPISKNENPPTPHTDV.

Polar residues predominate over residues 176-191 (TDMNQMQPQPISKNEN). The disordered stretch occupies residues 176 to 199 (TDMNQMQPQPISKNENPPTPHTDV).

It belongs to the alphaherpesvirinae HHV-1 UL14 protein family.

It localises to the virion tegument. The protein resides in the host cytoplasm. It is found in the host nucleus. Contributes to the nuclear transport of the viral transcriptional activator VP16 homolog during the early phase of infection. Therefore, participates indirectly in the regulation of the immediate-early gene expression. Additionally, seems to be important for efficient nuclear targeting of capsids. The protein is Tegument protein UL14 homolog of Varicella-zoster virus (strain Dumas) (HHV-3).